We begin with the raw amino-acid sequence, 197 residues long: Ribonuclease HII (197 aa).

Residues 11 to 197 form the RNase H type-2 domain; it reads GRIAGVDEVG…FGPVKRVLGL (187 aa). Residues aspartate 17, glutamate 18, and aspartate 109 each coordinate a divalent metal cation.

This sequence belongs to the RNase HII family. Requires Mn(2+) as cofactor. It depends on Mg(2+) as a cofactor.

Its subcellular location is the cytoplasm. It carries out the reaction Endonucleolytic cleavage to 5'-phosphomonoester.. In terms of biological role, endonuclease that specifically degrades the RNA of RNA-DNA hybrids. The sequence is that of Ribonuclease HII from Edwardsiella ictaluri (strain 93-146).